Reading from the N-terminus, the 749-residue chain is Protein Niban 2 (749 aa).

Residue G2 is the site of N-myristoyl glycine attachment. Residues 68–192 (RIIFSGNLFQ…WQAVLQDCVR (125 aa)) form the PH domain. Phosphoserine is present on residues S568, S574, S607, S628, S647, S650, S669, S674, S685, S695, and S699. The disordered stretch occupies residues 589–749 (WGEQYGDSGD…EDSAGVQTEF (161 aa)). A compositionally biased stretch (basic and acidic residues) spans 710–719 (VDLEPPKPSD). The segment covering 723–749 (GEQVSSPGSRPPIHTTTEDSAGVQTEF) has biased composition (polar residues).

Belongs to the Niban family. Post-translationally, as apoptosis proceeds, degraded via an proteasome-independent pathway, probably by caspases.

The protein localises to the cytoplasm. It localises to the cytosol. It is found in the cell junction. The protein resides in the adherens junction. Its subcellular location is the membrane. Functionally, may play a role in apoptosis suppression. This is Protein Niban 2 from Mus musculus (Mouse).